The primary structure comprises 439 residues: Ribosomal protein uS12 methylthiotransferase RimO (439 aa).

Positions 5-115 (PKIGFVSLGC…LIEAVHTHAP (111 aa)) constitute an MTTase N-terminal domain. [4Fe-4S] cluster is bound by residues Cys14, Cys50, Cys79, Cys146, Cys150, and Cys153. Positions 132–369 (LTPRHYSYLK…MGLQAQISAD (238 aa)) constitute a Radical SAM core domain. The 68-residue stretch at 372-439 (QRFVGTEQQV…ESTEYDLIAD (68 aa)) folds into the TRAM domain.

It belongs to the methylthiotransferase family. RimO subfamily. Requires [4Fe-4S] cluster as cofactor.

The protein resides in the cytoplasm. The enzyme catalyses L-aspartate(89)-[ribosomal protein uS12]-hydrogen + (sulfur carrier)-SH + AH2 + 2 S-adenosyl-L-methionine = 3-methylsulfanyl-L-aspartate(89)-[ribosomal protein uS12]-hydrogen + (sulfur carrier)-H + 5'-deoxyadenosine + L-methionine + A + S-adenosyl-L-homocysteine + 2 H(+). Functionally, catalyzes the methylthiolation of an aspartic acid residue of ribosomal protein uS12. The sequence is that of Ribosomal protein uS12 methylthiotransferase RimO from Francisella philomiragia subsp. philomiragia (strain ATCC 25017 / CCUG 19701 / FSC 153 / O#319-036).